The chain runs to 101 residues: Protein RALF-like 14 (101 aa).

The first 21 residues, 1-21, serve as a signal peptide directing secretion; it reads MKLLIFAVIISVVLFPVLVSS. The propeptide at 22 to 56 is removed in mature form; the sequence is RTIKCDQLSGKCINGEEKEIMNMRLGLDVSSRRIL. A disulfide bridge links Cys-90 with Cys-96.

This sequence belongs to the plant rapid alkalinization factor (RALF) family. Proteolytically cleaved, probably by S1P, a subtilisin-like serine protease (subtilase).

It localises to the secreted. In terms of biological role, cell signaling peptide that may regulate plant stress, growth, and development. Mediates a rapid alkalinization of extracellular space by mediating a transient increase in the cytoplasmic Ca(2+) concentration leading to a calcium-dependent signaling events through a cell surface receptor and a concomitant activation of some intracellular mitogen-activated protein kinases. The protein is Protein RALF-like 14 (RALFL14) of Arabidopsis thaliana (Mouse-ear cress).